Consider the following 276-residue polypeptide: Aquaporin-1 (276 aa).

The Cytoplasmic segment spans residues 1 to 10; that stretch reads MLDAEQKKNY. Residues 11–31 traverse the membrane as a helical segment; it reads VAGAFGEFVGTAYFLFMGVGG. Topologically, residues 32–46 are extracellular; the sequence is AVNFLNNAAGSPLPG. A helical transmembrane segment spans residues 47-67; sequence FAIPFCFGFSLFVNVFIWAPI. At 68-93 the chain is on the cytoplasmic side; the sequence is SGGVFNPSITIALMATNPKDFPWYRG. An NPA 1 motif is present at residues 73–75; the sequence is NPS. A helical transmembrane segment spans residues 94-114; the sequence is ILYIVSQFLGALFGSWLIDLI. Topologically, residues 115-133 are extracellular; the sequence is QPEAPNAATLLADGVSVAQ. Residues 134–154 form a helical membrane-spanning segment; the sequence is GLFMEMFATSVLTMAVLILAG. Residues 155–159 are Cytoplasmic-facing; that stretch reads ERYGK. Residues 160–180 traverse the membrane as a helical segment; that stretch reads YLAPFGIGMSLFISALCAGPY. Residues 181-204 are Extracellular-facing; that stretch reads TGASLNPARTLGPAIVANQYGRAH. The NPA 2 signature appears at 186–188; it reads NPA. The chain crosses the membrane as a helical span at residues 205–225; the sequence is WIYYVGPTLGSLLAAGYWHIL. Over 226-276 the chain is Cytoplasmic; it reads RILNIDVVDLKNVLNKCKKCGKEDPRISLKHCEECLKDDPKPEKYDIESQN.

It belongs to the MIP/aquaporin (TC 1.A.8) family.

It localises to the cell membrane. It catalyses the reaction H2O(in) = H2O(out). With respect to regulation, polyethylene glycol (PEG) stimulates whereas glycerol inhibits the aquaporin activity. Its function is as follows. Water channel required to facilitate the transport of water across membranes. Stimulates plant drought tolerance by facilitating the transport of water from the arbuscular mycorrhiza fungus to host plants. This is Aquaporin-1 from Rhizophagus irregularis (Arbuscular mycorrhizal fungus).